The following is a 433-amino-acid chain: Trigger factor (433 aa).

The region spanning 163–248 (GNFVVIDFVG…VKEAKVKELP (86 aa)) is the PPIase FKBP-type domain.

The protein belongs to the FKBP-type PPIase family. Tig subfamily.

The protein resides in the cytoplasm. It carries out the reaction [protein]-peptidylproline (omega=180) = [protein]-peptidylproline (omega=0). In terms of biological role, involved in protein export. Acts as a chaperone by maintaining the newly synthesized protein in an open conformation. Functions as a peptidyl-prolyl cis-trans isomerase. This chain is Trigger factor, found in Geobacter metallireducens (strain ATCC 53774 / DSM 7210 / GS-15).